The following is a 435-amino-acid chain: tRNA modification GTPase MnmE (435 aa).

Residues Arg-24, Glu-85, and Arg-124 each contribute to the (6S)-5-formyl-5,6,7,8-tetrahydrofolate site. The 142-residue stretch at 220-361 folds into the TrmE-type G domain; sequence GLVFTIVGAP…LRTALAERAR (142 aa). Asn-230 is a K(+) binding site. Residues 230-235, 249-255, and 274-277 contribute to the GTP site; these read NVGKSS, SAIAGTT, and DTAG. Ser-234 provides a ligand contact to Mg(2+). Residues Ser-249, Ile-251, and Thr-254 each contribute to the K(+) site. Thr-255 lines the Mg(2+) pocket. Residue Lys-435 coordinates (6S)-5-formyl-5,6,7,8-tetrahydrofolate.

The protein belongs to the TRAFAC class TrmE-Era-EngA-EngB-Septin-like GTPase superfamily. TrmE GTPase family. Homodimer. Heterotetramer of two MnmE and two MnmG subunits. K(+) serves as cofactor.

The protein resides in the cytoplasm. In terms of biological role, exhibits a very high intrinsic GTPase hydrolysis rate. Involved in the addition of a carboxymethylaminomethyl (cmnm) group at the wobble position (U34) of certain tRNAs, forming tRNA-cmnm(5)s(2)U34. In Gluconacetobacter diazotrophicus (strain ATCC 49037 / DSM 5601 / CCUG 37298 / CIP 103539 / LMG 7603 / PAl5), this protein is tRNA modification GTPase MnmE.